The following is a 433-amino-acid chain: Serine--tRNA ligase (433 aa).

An L-serine-binding site is contributed by 235–237 (TSE). An ATP-binding site is contributed by 266 to 268 (RSE). E289 is a binding site for L-serine. 353–356 (EISS) lines the ATP pocket. Residue S388 coordinates L-serine.

Belongs to the class-II aminoacyl-tRNA synthetase family. Type-1 seryl-tRNA synthetase subfamily. As to quaternary structure, homodimer. The tRNA molecule binds across the dimer.

It localises to the cytoplasm. It catalyses the reaction tRNA(Ser) + L-serine + ATP = L-seryl-tRNA(Ser) + AMP + diphosphate + H(+). The enzyme catalyses tRNA(Sec) + L-serine + ATP = L-seryl-tRNA(Sec) + AMP + diphosphate + H(+). It functions in the pathway aminoacyl-tRNA biosynthesis; selenocysteinyl-tRNA(Sec) biosynthesis; L-seryl-tRNA(Sec) from L-serine and tRNA(Sec): step 1/1. In terms of biological role, catalyzes the attachment of serine to tRNA(Ser). Is also able to aminoacylate tRNA(Sec) with serine, to form the misacylated tRNA L-seryl-tRNA(Sec), which will be further converted into selenocysteinyl-tRNA(Sec). This chain is Serine--tRNA ligase, found in Burkholderia pseudomallei (strain 668).